Here is a 136-residue protein sequence, read N- to C-terminus: Small ribosomal subunit protein uS8c (136 aa).

It belongs to the universal ribosomal protein uS8 family. Part of the 30S ribosomal subunit.

Its subcellular location is the plastid. The protein resides in the chloroplast. Functionally, one of the primary rRNA binding proteins, it binds directly to 16S rRNA central domain where it helps coordinate assembly of the platform of the 30S subunit. This chain is Small ribosomal subunit protein uS8c (rps8), found in Morus indica (Mulberry).